Reading from the N-terminus, the 1051-residue chain is Helicase POLQ-like (1051 aa).

The span at 1 to 10 shows a compositional bias: basic residues; sequence MANKHNLCKK. Disordered regions lie at residues 1–28 and 61–112; these read MANK…AKRQ and LFGT…APTD. Polar residues-rich tracts occupy residues 64–78 and 89–102; these read TQAT…QSGS and SFPS…NSAS. Positions 103–112 are enriched in basic and acidic residues; the sequence is KPDEASAPTD. The 173-residue stretch at 274-446 folds into the Helicase ATP-binding domain; it reads LPAIRQRKNL…FLNADVYTRG (173 aa). 287–294 is a binding site for ATP; sequence LPTSGGKT. A DEAH box motif is present at residues 391–394; it reads DELH. Residues 497 to 689 enclose the Helicase C-terminal domain; it reads HLAGLISECA…NEAVGLQSLI (193 aa).

This sequence belongs to the helicase family. SKI2 subfamily.

Its subcellular location is the nucleus. The protein resides in the chromosome. The enzyme catalyses Couples ATP hydrolysis with the unwinding of duplex DNA by translocating in the 3'-5' direction.. It carries out the reaction ATP + H2O = ADP + phosphate + H(+). Functionally, single-stranded 3'-5' DNA helicase that plays a key role in homology-driven double-strand break (DSB) repair. Involved in different DSB repair mechanisms that are guided by annealing of extensive stretches of complementary bases at break ends, such as microhomology-mediated end-joining (MMEJ), single-strand annealing (SSA) or synthesis-dependent strand annealing (SDSA). This is Helicase POLQ-like from Drosophila melanogaster (Fruit fly).